A 222-amino-acid chain; its full sequence is Peptide methionine sulfoxide reductase MsrA (222 aa).

Cys-60 is an active-site residue.

Belongs to the MsrA Met sulfoxide reductase family.

It catalyses the reaction L-methionyl-[protein] + [thioredoxin]-disulfide + H2O = L-methionyl-(S)-S-oxide-[protein] + [thioredoxin]-dithiol. It carries out the reaction [thioredoxin]-disulfide + L-methionine + H2O = L-methionine (S)-S-oxide + [thioredoxin]-dithiol. In terms of biological role, has an important function as a repair enzyme for proteins that have been inactivated by oxidation. Catalyzes the reversible oxidation-reduction of methionine sulfoxide in proteins to methionine. In Pseudomonas entomophila (strain L48), this protein is Peptide methionine sulfoxide reductase MsrA.